The primary structure comprises 485 residues: Ribulose bisphosphate carboxylase large chain (485 aa).

Residues 1–2 (MS) constitute a propeptide that is removed on maturation. Pro-3 carries the N-acetylproline modification. Lys-14 is modified (N6,N6,N6-trimethyllysine). Substrate-binding residues include Asn-123 and Thr-173. The active-site Proton acceptor is the Lys-175. Residue Lys-177 coordinates substrate. Mg(2+)-binding residues include Lys-201, Asp-203, and Glu-204. At Lys-201 the chain carries N6-carboxylysine. Catalysis depends on His-294, which acts as the Proton acceptor. Positions 295, 327, and 379 each coordinate substrate.

This sequence belongs to the RuBisCO large chain family. Type I subfamily. As to quaternary structure, heterohexadecamer of 8 large chains and 8 small chains; disulfide-linked. The disulfide link is formed within the large subunit homodimers. The cofactor is Mg(2+). The disulfide bond which can form in the large chain dimeric partners within the hexadecamer appears to be associated with oxidative stress and protein turnover.

It localises to the plastid. The protein resides in the chloroplast. The catalysed reaction is 2 (2R)-3-phosphoglycerate + 2 H(+) = D-ribulose 1,5-bisphosphate + CO2 + H2O. The enzyme catalyses D-ribulose 1,5-bisphosphate + O2 = 2-phosphoglycolate + (2R)-3-phosphoglycerate + 2 H(+). RuBisCO catalyzes two reactions: the carboxylation of D-ribulose 1,5-bisphosphate, the primary event in carbon dioxide fixation, as well as the oxidative fragmentation of the pentose substrate in the photorespiration process. Both reactions occur simultaneously and in competition at the same active site. The polypeptide is Ribulose bisphosphate carboxylase large chain (Helianthus annuus (Common sunflower)).